The chain runs to 217 residues: Small ribosomal subunit protein uS5 (217 aa).

Residues Leu-49–Val-112 form the S5 DRBM domain.

It belongs to the universal ribosomal protein uS5 family. In terms of assembly, part of the 30S ribosomal subunit. Contacts protein S4.

Its function is as follows. With S4 and S12 plays an important role in translational accuracy. This is Small ribosomal subunit protein uS5 from Methanocaldococcus jannaschii (strain ATCC 43067 / DSM 2661 / JAL-1 / JCM 10045 / NBRC 100440) (Methanococcus jannaschii).